Consider the following 564-residue polypeptide: Arrestin domain-containing protein E (564 aa).

Low complexity predominate over residues 74 to 146 (SQQPQSSQPS…NTSNGFSPPN (73 aa)). 2 disordered regions span residues 74–150 (SQQP…LNKN) and 245–286 (ASQP…SFPS). Over residues 250 to 259 (PQQPQQPQPQ) the composition is skewed to pro residues. A compositionally biased stretch (low complexity) spans 260 to 269 (QPQQQQFQQQ). The span at 270–285 (SYNNNNSTQSMLSSFP) shows a compositional bias: polar residues. Residues 348-413 (DKCAACDALL…PMCFESTTGL (66 aa)) enclose the LIM zinc-binding domain.

The chain is Arrestin domain-containing protein E (adcE) from Dictyostelium discoideum (Social amoeba).